Consider the following 280-residue polypeptide: ATP synthase subunit a (280 aa).

Helical transmembrane passes span 45-65 (AINV…LFLF), 105-125 (LVAP…LMDL), 126-146 (LPVD…LKVV), 159-179 (LSIF…GGFF), 190-210 (FLFP…PISL), 223-243 (MIFI…LFGG), and 250-270 (AVFH…LTIV).

Belongs to the ATPase A chain family. As to quaternary structure, F-type ATPases have 2 components, CF(1) - the catalytic core - and CF(0) - the membrane proton channel. CF(1) has five subunits: alpha(3), beta(3), gamma(1), delta(1), epsilon(1). CF(0) has three main subunits: a(1), b(2) and c(9-12). The alpha and beta chains form an alternating ring which encloses part of the gamma chain. CF(1) is attached to CF(0) by a central stalk formed by the gamma and epsilon chains, while a peripheral stalk is formed by the delta and b chains.

Its subcellular location is the cell inner membrane. Its function is as follows. Key component of the proton channel; it plays a direct role in the translocation of protons across the membrane. The chain is ATP synthase subunit a from Thiobacillus denitrificans (strain ATCC 25259 / T1).